The chain runs to 274 residues: Undecaprenyl-diphosphatase (274 aa).

Transmembrane regions (helical) follow at residues Met-1–Ile-21, Val-48–Gly-68, Leu-84–Ile-104, Leu-108–Ile-128, Ile-143–Gly-163, Phe-187–Ser-207, Ile-214–Ile-234, and Val-254–Leu-274.

This sequence belongs to the UppP family.

Its subcellular location is the cell membrane. It catalyses the reaction di-trans,octa-cis-undecaprenyl diphosphate + H2O = di-trans,octa-cis-undecaprenyl phosphate + phosphate + H(+). In terms of biological role, catalyzes the dephosphorylation of undecaprenyl diphosphate (UPP). Confers resistance to bacitracin. The sequence is that of Undecaprenyl-diphosphatase from Deinococcus geothermalis (strain DSM 11300 / CIP 105573 / AG-3a).